A 477-amino-acid chain; its full sequence is Glycogen synthase (477 aa).

Lys15 lines the ADP-alpha-D-glucose pocket.

It belongs to the glycosyltransferase 1 family. Bacterial/plant glycogen synthase subfamily.

It carries out the reaction [(1-&gt;4)-alpha-D-glucosyl](n) + ADP-alpha-D-glucose = [(1-&gt;4)-alpha-D-glucosyl](n+1) + ADP + H(+). The protein operates within glycan biosynthesis; glycogen biosynthesis. Its function is as follows. Synthesizes alpha-1,4-glucan chains using ADP-glucose. In Streptococcus pneumoniae (strain Hungary19A-6), this protein is Glycogen synthase.